Reading from the N-terminus, the 477-residue chain is Aspartyl/glutamyl-tRNA(Asn/Gln) amidotransferase subunit B (477 aa).

It belongs to the GatB/GatE family. GatB subfamily. Heterotrimer of A, B and C subunits.

The enzyme catalyses L-glutamyl-tRNA(Gln) + L-glutamine + ATP + H2O = L-glutaminyl-tRNA(Gln) + L-glutamate + ADP + phosphate + H(+). The catalysed reaction is L-aspartyl-tRNA(Asn) + L-glutamine + ATP + H2O = L-asparaginyl-tRNA(Asn) + L-glutamate + ADP + phosphate + 2 H(+). Functionally, allows the formation of correctly charged Asn-tRNA(Asn) or Gln-tRNA(Gln) through the transamidation of misacylated Asp-tRNA(Asn) or Glu-tRNA(Gln) in organisms which lack either or both of asparaginyl-tRNA or glutaminyl-tRNA synthetases. The reaction takes place in the presence of glutamine and ATP through an activated phospho-Asp-tRNA(Asn) or phospho-Glu-tRNA(Gln). The sequence is that of Aspartyl/glutamyl-tRNA(Asn/Gln) amidotransferase subunit B from Coxiella burnetii (strain RSA 493 / Nine Mile phase I).